The following is a 264-amino-acid chain: S-adenosylmethionine decarboxylase proenzyme (264 aa).

Residue S113 is the Schiff-base intermediate with substrate; via pyruvic acid of the active site. The residue at position 113 (S113) is a Pyruvic acid (Ser); by autocatalysis. The Proton acceptor; for processing activity role is filled by H118. C141 (proton donor; for catalytic activity) is an active-site residue.

Belongs to the prokaryotic AdoMetDC family. Type 2 subfamily. As to quaternary structure, heterooctamer of four alpha and four beta chains arranged as a tetramer of alpha/beta heterodimers. Requires pyruvate as cofactor. Is synthesized initially as an inactive proenzyme. Formation of the active enzyme involves a self-maturation process in which the active site pyruvoyl group is generated from an internal serine residue via an autocatalytic post-translational modification. Two non-identical subunits are generated from the proenzyme in this reaction, and the pyruvate is formed at the N-terminus of the alpha chain, which is derived from the carboxyl end of the proenzyme. The post-translation cleavage follows an unusual pathway, termed non-hydrolytic serinolysis, in which the side chain hydroxyl group of the serine supplies its oxygen atom to form the C-terminus of the beta chain, while the remainder of the serine residue undergoes an oxidative deamination to produce ammonia and the pyruvoyl group blocking the N-terminus of the alpha chain.

The catalysed reaction is S-adenosyl-L-methionine + H(+) = S-adenosyl 3-(methylsulfanyl)propylamine + CO2. Its pathway is amine and polyamine biosynthesis; S-adenosylmethioninamine biosynthesis; S-adenosylmethioninamine from S-adenosyl-L-methionine: step 1/1. Catalyzes the decarboxylation of S-adenosylmethionine to S-adenosylmethioninamine (dcAdoMet), the propylamine donor required for the synthesis of the polyamines spermine and spermidine from the diamine putrescine. The protein is S-adenosylmethionine decarboxylase proenzyme of Xylella fastidiosa (strain Temecula1 / ATCC 700964).